The primary structure comprises 326 residues: uncharacterized protein (326 aa).

Residues 293 to 326 (HRNYDANHSTSGEEENSGSRSRIAELSQSTIHRR) form a disordered region.

This is an uncharacterized protein from Oryza latifolia (Indian wild rice).